The primary structure comprises 299 residues: Bifunctional protein FolD (299 aa).

NADP(+)-binding positions include 168-170, serine 193, and isoleucine 234; that span reads GRS.

It belongs to the tetrahydrofolate dehydrogenase/cyclohydrolase family. In terms of assembly, homodimer.

It catalyses the reaction (6R)-5,10-methylene-5,6,7,8-tetrahydrofolate + NADP(+) = (6R)-5,10-methenyltetrahydrofolate + NADPH. It carries out the reaction (6R)-5,10-methenyltetrahydrofolate + H2O = (6R)-10-formyltetrahydrofolate + H(+). Its pathway is one-carbon metabolism; tetrahydrofolate interconversion. Its function is as follows. Catalyzes the oxidation of 5,10-methylenetetrahydrofolate to 5,10-methenyltetrahydrofolate and then the hydrolysis of 5,10-methenyltetrahydrofolate to 10-formyltetrahydrofolate. The polypeptide is Bifunctional protein FolD (Rhizobium johnstonii (strain DSM 114642 / LMG 32736 / 3841) (Rhizobium leguminosarum bv. viciae)).